A 40-amino-acid chain; its full sequence is Dolichyl-diphosphooligosaccharide--protein glycosyltransferase subunit 4 (40 aa).

Over 1 to 4 (MISD) the chain is Lumenal. The chain crosses the membrane as a helical span at residues 5-25 (VQLAIFSNVLGVFLFLLVVAY). Over 26–40 (HYINANTGKPSAKAK) the chain is Cytoplasmic.

Belongs to the OST4 family. As to quaternary structure, component of the oligosaccharyltransferase (OST) complex.

The protein resides in the endoplasmic reticulum membrane. Its function is as follows. Subunit of the oligosaccharyl transferase (OST) complex that catalyzes the initial transfer of a defined glycan (Glc(3)Man(9)GlcNAc(2) in eukaryotes) from the lipid carrier dolichol-pyrophosphate to an asparagine residue within an Asn-X-Ser/Thr consensus motif in nascent polypeptide chains, the first step in protein N-glycosylation. N-glycosylation occurs cotranslationally and the complex associates with the Sec61 complex at the channel-forming translocon complex that mediates protein translocation across the endoplasmic reticulum (ER). All subunits are required for a maximal enzyme activity. This chain is Dolichyl-diphosphooligosaccharide--protein glycosyltransferase subunit 4, found in Drosophila yakuba (Fruit fly).